We begin with the raw amino-acid sequence, 21 residues long: Bombinin-H1/H3 (21 aa).

I2 bears the D-allo-isoleucine; in form H3 mark. I20 is subject to Isoleucine amide.

The protein belongs to the bombinin family. In terms of tissue distribution, expressed by the skin glands.

It localises to the secreted. Its function is as follows. Has antimicrobial and hemolytic activities. The protein is Bombinin-H1/H3 of Bombina variegata (Yellow-bellied toad).